The sequence spans 409 residues: Phosphoglycerate kinase (409 aa).

Substrate is bound by residues 22 to 24, Arg-37, 60 to 63, Arg-122, and Arg-164; these read DLN and HLSR. Residues Lys-215, Glu-338, and 365 to 368 contribute to the ATP site; that span reads GGDS.

This sequence belongs to the phosphoglycerate kinase family. In terms of assembly, monomer.

It is found in the cytoplasm. The enzyme catalyses (2R)-3-phosphoglycerate + ATP = (2R)-3-phospho-glyceroyl phosphate + ADP. It functions in the pathway carbohydrate degradation; glycolysis; pyruvate from D-glyceraldehyde 3-phosphate: step 2/5. In Mycoplasma pneumoniae (strain ATCC 29342 / M129 / Subtype 1) (Mycoplasmoides pneumoniae), this protein is Phosphoglycerate kinase (pgk).